A 461-amino-acid chain; its full sequence is Argininosuccinate lyase (461 aa).

The protein belongs to the lyase 1 family. Argininosuccinate lyase subfamily.

It localises to the cytoplasm. It catalyses the reaction 2-(N(omega)-L-arginino)succinate = fumarate + L-arginine. Its pathway is amino-acid biosynthesis; L-arginine biosynthesis; L-arginine from L-ornithine and carbamoyl phosphate: step 3/3. This chain is Argininosuccinate lyase, found in Limosilactobacillus reuteri subsp. reuteri (strain JCM 1112) (Lactobacillus reuteri).